The primary structure comprises 213 residues: Ras-related protein Rab-2 (213 aa).

The GTP site is built by Thr-15, Gly-16, Gly-18, Lys-19, Ser-20, Cys-21, Gln-32, Pro-33, His-35, Thr-38, Gly-64, Asn-119, Asp-122, and Ala-150. Ser-20 contacts Mg(2+). Thr-38 is a Mg(2+) binding site. The interval 190–213 (QHSPTNPSLPGAGGAAGAANSGCC) is disordered. Residues Cys-212 and Cys-213 are each lipidated (S-geranylgeranyl cysteine).

The protein belongs to the small GTPase superfamily. Rab family. Interacts (GTP-bound form) with Vps16A and Vps39; the interaction with Vps39 is probably direct.

It localises to the vesicle. The protein localises to the cytoplasmic vesicle. The protein resides in the cell projection. Its subcellular location is the axon. It is found in the presynapse. It localises to the presynaptic active zone. The protein localises to the golgi apparatus. The protein resides in the trans-Golgi network. Its subcellular location is the perikaryon. It is found in the autophagosome membrane. It localises to the autolysosome membrane. It carries out the reaction GTP + H2O = GDP + phosphate + H(+). Functionally, may be involved in bidirectional endoplasmic reticulum (ER) to Golgi trafficking. Together with Rab7 involved in promoting fusion of autophagosomes and endosomes with lysosomes, probably through recruitment of the HOPS tethering complex. Involved in biosynthetic transport to lysosomes. In larval motor neurons, mediates the biogenesis of presynaptic cargo vesicles and their long-range axonal trafficking to synaptic termini. Not involved in axonal trafficking of mitochondria. During vesicle biogenesis, active zone proteins (including brp/Bruchpilot) and synaptic vesicle proteins (including VGlut) are sorted from the trans-Golgi in a Rab2-dependent manner via, at least, two independent routes. Acts upstream of Arl8 during presynaptic precursor vesicle biogenesis. Associated with lysosomal marker positive presynaptic cargo vesicles during anterograde and retrograde axonal trafficking, probably while in its GTP-bound active state. Involved in the delivery of presynaptic cargos, but not presynapse assembly or active zone function at synaptic termini. Required for autophagocytosis-dependent remodeling of myofibrils and transverse-tubules (T-tubules) during metamorphosis. The protein is Ras-related protein Rab-2 of Drosophila melanogaster (Fruit fly).